Consider the following 578-residue polypeptide: Adenine deaminase (578 aa).

The protein belongs to the metallo-dependent hydrolases superfamily. Adenine deaminase family. Requires Mn(2+) as cofactor.

It catalyses the reaction adenine + H2O + H(+) = hypoxanthine + NH4(+). The sequence is that of Adenine deaminase from Ligilactobacillus salivarius (strain UCC118) (Lactobacillus salivarius).